The chain runs to 801 residues: Na(+)/H(+) antiporter subunit A1 (801 aa).

A run of 19 helical transmembrane segments spans residues 1 to 21 (MSLLHIAVILPLIFALIIPIL), 28 to 48 (IHLGWFVLPVPIVIFIYMLTL), 79 to 99 (LGLLFSLLISGIGSLVVLYSI), 117 to 137 (LFMGAMLGVVLSDNVIILYLF), 166 to 186 (LIITVFGGLSLLGGIILLAIP), 206 to 226 (PFFIFAMILIMIGAFTKSAQF), 265 to 285 (IFAASQGWVWTVTLVGLITLF), 300 to 320 (ILAFSTVSQLGMIMAMLGIGA), 337 to 357 (FTAAIFHLINHATFKGALFMI), 373 to 393 (LGGLLTIMPISFTITVITALS), 427 to 447 (LGYLFPIIGIVGSVFTFVYSI), 472 to 492 (ILMLLSPAILATLVIVLGLFP), 522 to 542 (GLTPAFLSTLVIYILGILLIV), 591 to 611 (LVIIFGALILLTFVTIFSVPF), 623 to 643 (IFEVCIVILLLSAAFLILFAK), 646 to 666 (LFSIIMLSAVGYAVSVLFIFF), 671 to 691 (LALTQFVVESISTALFLLCFY), 707 to 727 (LTNALIAGGVGLSVIIIGLIA), and 764 to 784 (MDTLFESSVLGIAGLAVYTMI).

It belongs to the CPA3 antiporters (TC 2.A.63) subunit A family. May form a heterooligomeric complex that consists of seven subunits: mnhA1, mnhB1, mnhC1, mnhD1, mnhE1, mnhF1 and mnhG1.

It is found in the cell membrane. In terms of biological role, mnh complex is a Na(+)/H(+) antiporter involved in Na(+) excretion. The sequence is that of Na(+)/H(+) antiporter subunit A1 (mnhA1) from Staphylococcus aureus (strain Mu3 / ATCC 700698).